The sequence spans 63 residues: MSRKCEICGKGPSFGNNVSHANNKTRTTWYPNLQKVKAVRNGSVQTIKVCTRCIRSGHVTKAI.

Belongs to the bacterial ribosomal protein bL28 family.

This Geobacter metallireducens (strain ATCC 53774 / DSM 7210 / GS-15) protein is Large ribosomal subunit protein bL28.